We begin with the raw amino-acid sequence, 455 residues long: Pentatricopeptide repeat-containing protein At3g26630, chloroplastic (455 aa).

The N-terminal 19 residues, Met1 to Arg19, are a transit peptide targeting the chloroplast. 11 PPR repeats span residues Asp51–Pro81, Ser82–Phe117, Asp118–Asn152, Asp153–Ser187, Trp188–Arg214, Asn215–Pro249, Asn250–Leu284, Asp285–Lys315, Ser316–Glu350, Asp352–Pro387, and Ile388–Asp418.

It belongs to the PPR family. PCMP-A subfamily.

The protein localises to the plastid. It localises to the chloroplast. The chain is Pentatricopeptide repeat-containing protein At3g26630, chloroplastic (PCMP-A6) from Arabidopsis thaliana (Mouse-ear cress).